Here is an 831-residue protein sequence, read N- to C-terminus: Heat shock 70 kDa protein 15 (831 aa).

Disordered stretches follow at residues 502 to 579 and 784 to 831; these read EEEV…KKKV and IMTK…EGST. Over residues 512–526 the composition is skewed to basic and acidic residues; it reads DQSEETAKMDTDKAS. Phosphoserine occurs at positions 533 and 536. Positions 787-800 are enriched in low complexity; it reads KPKPAAKAEAPQAK.

Belongs to the heat shock protein 70 (TC 1.A.33) family. HSP110/SSE subfamily.

It is found in the cytoplasm. It localises to the nucleus. In cooperation with other chaperones, Hsp70s are key components that facilitate folding of de novo synthesized proteins, assist translocation of precursor proteins into organelles, and are responsible for degradation of damaged protein under stress conditions. This Arabidopsis thaliana (Mouse-ear cress) protein is Heat shock 70 kDa protein 15 (HSP70-15).